Consider the following 444-residue polypeptide: ATP-dependent protease ATPase subunit HslU (444 aa).

Residues isoleucine 18, 60–65 (GVGKTE), aspartate 256, glutamate 322, and arginine 394 contribute to the ATP site.

It belongs to the ClpX chaperone family. HslU subfamily. In terms of assembly, a double ring-shaped homohexamer of HslV is capped on each side by a ring-shaped HslU homohexamer. The assembly of the HslU/HslV complex is dependent on binding of ATP.

Its subcellular location is the cytoplasm. Functionally, ATPase subunit of a proteasome-like degradation complex; this subunit has chaperone activity. The binding of ATP and its subsequent hydrolysis by HslU are essential for unfolding of protein substrates subsequently hydrolyzed by HslV. HslU recognizes the N-terminal part of its protein substrates and unfolds these before they are guided to HslV for hydrolysis. The protein is ATP-dependent protease ATPase subunit HslU of Klebsiella pneumoniae subsp. pneumoniae (strain ATCC 700721 / MGH 78578).